Here is a 144-residue protein sequence, read N- to C-terminus: Peptidyl-Asp metalloendopeptidase (144 aa).

Residue histidine 64 coordinates Zn(2+). Glutamate 65 is a catalytic residue. Histidine 68 is a Zn(2+) binding site.

Belongs to the peptidase M72 family. Requires Zn(2+) as cofactor.

It carries out the reaction Cleavage of Xaa-|-Asp, Xaa-|-Glu and Xaa-|-cysteic acid bonds.. Functionally, metalloprotease, specifically cleaves on the N-terminal side of aspartyl, glutamyl and cysteic acid residues. The polypeptide is Peptidyl-Asp metalloendopeptidase (Pseudomonas fragi).